A 70-amino-acid polypeptide reads, in one-letter code: Cold shock-like protein CspB (70 aa).

The 61-residue stretch at 7–67 folds into the CSD domain; it reads GLVKWFDAGK…GQKGPSAVNV (61 aa).

The protein resides in the cytoplasm. In Yersinia enterocolitica, this protein is Cold shock-like protein CspB (cspB).